A 482-amino-acid polypeptide reads, in one-letter code: 2-succinylbenzoate--CoA ligase (482 aa).

It belongs to the ATP-dependent AMP-binding enzyme family. MenE subfamily.

It carries out the reaction 2-succinylbenzoate + ATP + CoA = 2-succinylbenzoyl-CoA + AMP + diphosphate. Its pathway is quinol/quinone metabolism; 1,4-dihydroxy-2-naphthoate biosynthesis; 1,4-dihydroxy-2-naphthoate from chorismate: step 5/7. The protein operates within quinol/quinone metabolism; menaquinone biosynthesis. Converts 2-succinylbenzoate (OSB) to 2-succinylbenzoyl-CoA (OSB-CoA). The polypeptide is 2-succinylbenzoate--CoA ligase (Bacillus cereus (strain ZK / E33L)).